Consider the following 678-residue polypeptide: DNA ligase (678 aa).

Residues 47–51 (DSDYD), 96–97 (SL), and Glu122 each bind NAD(+). Lys124 functions as the N6-AMP-lysine intermediate in the catalytic mechanism. Residues Arg145, Glu182, Lys300, and Lys324 each contribute to the NAD(+) site. Positions 418, 421, 436, and 442 each coordinate Zn(2+). Residues 602–678 (AYNESFTGKT…ILEDNLKDLL (77 aa)) form the BRCT domain.

This sequence belongs to the NAD-dependent DNA ligase family. LigA subfamily. Mg(2+) is required as a cofactor. The cofactor is Mn(2+).

It catalyses the reaction NAD(+) + (deoxyribonucleotide)n-3'-hydroxyl + 5'-phospho-(deoxyribonucleotide)m = (deoxyribonucleotide)n+m + AMP + beta-nicotinamide D-nucleotide.. DNA ligase that catalyzes the formation of phosphodiester linkages between 5'-phosphoryl and 3'-hydroxyl groups in double-stranded DNA using NAD as a coenzyme and as the energy source for the reaction. It is essential for DNA replication and repair of damaged DNA. The protein is DNA ligase of Francisella tularensis subsp. holarctica (strain OSU18).